A 138-amino-acid chain; its full sequence is Nanos homolog 2 (138 aa).

Positions 31-55 (ETQEIEEPSPGPPLGQDQGLGAPGA) are disordered. The Nanos-type zinc finger occupies 62 to 116 (LCNFCKHNGESRHVYSSHQLKTPDGVVVCPILRHYVCPVCGATGDQAHTLKYCPL). Zn(2+)-binding residues include C63, C66, H79, C90, C98, C101, H109, and C114. 2 short sequence motifs (C2HC) span residues 63-90 (CNFCKHNGESRHVYSSHQLKTPDGVVVC) and 98-114 (CPVCGATGDQAHTLKYC).

This sequence belongs to the nanos family. Interacts with CNOT1, CNOT3, CNOT6L, CNOT7 and CNOT9. Testis and ovary. Expression found in several spermatogenic stages: in cells on the periphery of the tubules which could correspond to spermatogonia, in spermatocytes and in round spermatids (at protein level).

The protein resides in the cytoplasm. Its subcellular location is the P-body. The protein localises to the perinuclear region. Plays a key role in the sexual differentiation of germ cells by promoting the male fate but suppressing the female fate. Represses the female fate pathways by suppressing meiosis, which in turn results in the promotion of the male fate. Maintains the suppression of meiosis by preventing STRA8 expression, which is required for premeiotic DNA replication, after CYP26B1 is decreased. Regulates the localization of the CCR4-NOT deadenylation complex to P-bodies and plays a role in recruiting the complex to trigger the degradation of mRNAs involved in meiosis. Required for the maintenance of the spermatogonial stem cell population. Not essential for the assembly of P-bodies but is required for the maintenance of their normal state. The protein is Nanos homolog 2 (NANOS2) of Homo sapiens (Human).